A 315-amino-acid chain; its full sequence is Tryptophan prenyltransferase ComQ (315 aa).

Mg(2+) is bound by residues Asp95 and Asp99.

Belongs to the FPP/GGPP synthase family. The cofactor is Mg(2+).

Its subcellular location is the cell membrane. It carries out the reaction L-tryptophyl-[protein] + (2E,6E)-farnesyl diphosphate = (2S,3R)-3-farnesyl-2,3-dihydro-2,N(alpha)-cyclo-L-tryptophyl-[protein] + diphosphate. Its function is as follows. Part of a major quorum-sensing system that regulates the development of genetic competence. Involved in the maturation of the competence pheromone ComX. Acts by catalyzing the transfer of a farnesyl group on the ComX pheromone. In vitro, can also catalyze the farnesylation of single tryptophan and tryptophan derivatives. This is Tryptophan prenyltransferase ComQ from Bacillus subtilis subsp. natto (strain BEST195).